We begin with the raw amino-acid sequence, 351 residues long: Foldase protein PrsA 1 (351 aa).

A signal peptide spans 1 to 22; sequence MKNSNKLIASVVTLASVMALAA. Cysteine 23 carries the N-palmitoyl cysteine lipid modification. Residue cysteine 23 is the site of S-diacylglycerol cysteine attachment. Positions 145–240 constitute a PpiC domain; that stretch reads TPTMAVEMIT…KKFYIVKVTK (96 aa). 2 stretches are compositionally biased toward low complexity: residues 303–317 and 326–351; these read KTKA…SESS and ESEQ…PAAQ. Residues 303 to 351 are disordered; it reads KTKAASESSTTSESSKAAEENPSESEQTQTSSAEEPTETEAQTQEPAAQ.

Belongs to the PrsA family.

Its subcellular location is the cell membrane. The enzyme catalyses [protein]-peptidylproline (omega=180) = [protein]-peptidylproline (omega=0). Functionally, plays a major role in protein secretion by helping the post-translocational extracellular folding of several secreted proteins. The chain is Foldase protein PrsA 1 from Streptococcus pyogenes serotype M6 (strain ATCC BAA-946 / MGAS10394).